Consider the following 508-residue polypeptide: Lysine--tRNA ligase (508 aa).

Residues E418 and E425 each contribute to the Mg(2+) site.

It belongs to the class-II aminoacyl-tRNA synthetase family. As to quaternary structure, homodimer. Requires Mg(2+) as cofactor.

The protein localises to the cytoplasm. It carries out the reaction tRNA(Lys) + L-lysine + ATP = L-lysyl-tRNA(Lys) + AMP + diphosphate. The sequence is that of Lysine--tRNA ligase from Burkholderia pseudomallei (strain 668).